The following is a 517-amino-acid chain: Methylmalonyl-CoA decarboxylase subunit alpha (517 aa).

The 257-residue stretch at 4 to 260 folds into the CoA carboxyltransferase N-terminal domain; sequence AAKKIQDLQK…NNMEKAPEFG (257 aa). The CoA carboxyltransferase C-terminal domain occupies 271 to 513; it reads ELDALMPDNP…REKLPAKKHG (243 aa).

This sequence belongs to the AccD/PCCB family. As to quaternary structure, the methylmalonyl-CoA decarboxylase is composed of four subunits: the carboxyltransferase alpha subunit (MmdA), the tunnel beta subunit (MmdB), the biotin-containing gamma subunit (MmdC) and the delta subunit (MmdD).

It localises to the cell membrane. It catalyses the reaction (S)-methylmalonyl-CoA + Na(+)(in) + H(+)(out) = propanoyl-CoA + Na(+)(out) + CO2. In terms of biological role, carboxyltransferase subunit of the sodium ion pump methylmalonyl-CoA decarboxylase, which converts the chemical energy of a decarboxylation reaction into an electrochemical gradient of Na(+) ions across the cytoplasmic membrane, thereby creating a sodium ion motive force that is used for ATP synthesis. The alpha subunit catalyzes the Na(+)-independent carboxyltransfer from methylmalonyl-CoA to the prosthetic biotin group located on the gamma subunit. The chain is Methylmalonyl-CoA decarboxylase subunit alpha from Propionigenium modestum.